A 426-amino-acid chain; its full sequence is Nucleolar protein 12 (426 aa).

A disordered region spans residues 26-128 (QSSGPVDTLE…SKRASRPDMK (103 aa)). Residues 87 to 105 (LEEKYMQQVLKEDSDHESE) are compositionally biased toward basic and acidic residues. RRM domains follow at residues 137-251 (RTVF…SVAH) and 259-339 (RSVF…RCRN). Positions 401–415 (KARSKTGRVTKRSQA) are enriched in basic residues. The disordered stretch occupies residues 401–426 (KARSKTGRVTKRSQAFKKAEANKKQK). The span at 417 to 426 (KKAEANKKQK) shows a compositional bias: basic and acidic residues.

It belongs to the RRM RBM34 family.

It localises to the nucleus. Its subcellular location is the nucleolus. Functionally, involved in pre-25S rRNA processing. The polypeptide is Nucleolar protein 12 (NOP12) (Eremothecium gossypii (strain ATCC 10895 / CBS 109.51 / FGSC 9923 / NRRL Y-1056) (Yeast)).